Reading from the N-terminus, the 291-residue chain is Ribonuclease Z (291 aa).

Zn(2+) is bound by residues histidine 60, histidine 62, aspartate 64, histidine 65, histidine 132, aspartate 200, and histidine 256. Aspartate 64 (proton acceptor) is an active-site residue.

This sequence belongs to the RNase Z family. As to quaternary structure, homodimer. Zn(2+) is required as a cofactor.

It carries out the reaction Endonucleolytic cleavage of RNA, removing extra 3' nucleotides from tRNA precursor, generating 3' termini of tRNAs. A 3'-hydroxy group is left at the tRNA terminus and a 5'-phosphoryl group is left at the trailer molecule.. Functionally, zinc phosphodiesterase, which displays some tRNA 3'-processing endonuclease activity. Probably involved in tRNA maturation, by removing a 3'-trailer from precursor tRNA. In Metallosphaera sedula (strain ATCC 51363 / DSM 5348 / JCM 9185 / NBRC 15509 / TH2), this protein is Ribonuclease Z.